The sequence spans 271 residues: Tryptophan synthase alpha chain (271 aa).

Residues E49 and D60 each act as proton acceptor in the active site.

It belongs to the TrpA family. As to quaternary structure, tetramer of two alpha and two beta chains.

The enzyme catalyses (1S,2R)-1-C-(indol-3-yl)glycerol 3-phosphate + L-serine = D-glyceraldehyde 3-phosphate + L-tryptophan + H2O. It participates in amino-acid biosynthesis; L-tryptophan biosynthesis; L-tryptophan from chorismate: step 5/5. Functionally, the alpha subunit is responsible for the aldol cleavage of indoleglycerol phosphate to indole and glyceraldehyde 3-phosphate. The sequence is that of Tryptophan synthase alpha chain from Nitrosococcus oceani (strain ATCC 19707 / BCRC 17464 / JCM 30415 / NCIMB 11848 / C-107).